Reading from the N-terminus, the 284-residue chain is Bifunctional protein FolD (284 aa).

NADP(+)-binding positions include 164-166 (GRS) and Ser189.

Belongs to the tetrahydrofolate dehydrogenase/cyclohydrolase family. In terms of assembly, homodimer.

It carries out the reaction (6R)-5,10-methylene-5,6,7,8-tetrahydrofolate + NADP(+) = (6R)-5,10-methenyltetrahydrofolate + NADPH. The catalysed reaction is (6R)-5,10-methenyltetrahydrofolate + H2O = (6R)-10-formyltetrahydrofolate + H(+). Its pathway is one-carbon metabolism; tetrahydrofolate interconversion. Functionally, catalyzes the oxidation of 5,10-methylenetetrahydrofolate to 5,10-methenyltetrahydrofolate and then the hydrolysis of 5,10-methenyltetrahydrofolate to 10-formyltetrahydrofolate. This is Bifunctional protein FolD from Listeria monocytogenes serovar 1/2a (strain ATCC BAA-679 / EGD-e).